The chain runs to 702 residues: Ribosomal RNA large subunit methyltransferase K/L (702 aa).

Positions 43–154 (LVYQSLMWSR…KETASIALDL (112 aa)) constitute a THUMP domain.

This sequence belongs to the methyltransferase superfamily. RlmKL family.

Its subcellular location is the cytoplasm. The catalysed reaction is guanosine(2445) in 23S rRNA + S-adenosyl-L-methionine = N(2)-methylguanosine(2445) in 23S rRNA + S-adenosyl-L-homocysteine + H(+). The enzyme catalyses guanosine(2069) in 23S rRNA + S-adenosyl-L-methionine = N(2)-methylguanosine(2069) in 23S rRNA + S-adenosyl-L-homocysteine + H(+). In terms of biological role, specifically methylates the guanine in position 2445 (m2G2445) and the guanine in position 2069 (m7G2069) of 23S rRNA. The protein is Ribosomal RNA large subunit methyltransferase K/L of Escherichia coli (strain K12 / DH10B).